A 104-amino-acid polypeptide reads, in one-letter code: Cell division protein FtsB (104 aa).

The Cytoplasmic segment spans residues 1-3; it reads MGK. A helical transmembrane segment spans residues 4–21; that stretch reads LTLLLLVLLGWLQYSLWL. Over 22 to 104 the chain is Periplasmic; sequence GKNGIHDYTR…NAQQGRPASQ (83 aa). The stretch at 33–62 forms a coiled coil; the sequence is DEDVASQQGNNAKLKARNDRLFAEIDDLNG.

Belongs to the FtsB family. Part of a complex composed of FtsB, FtsL and FtsQ.

It is found in the cell inner membrane. Functionally, essential cell division protein. May link together the upstream cell division proteins, which are predominantly cytoplasmic, with the downstream cell division proteins, which are predominantly periplasmic. In Erwinia tasmaniensis (strain DSM 17950 / CFBP 7177 / CIP 109463 / NCPPB 4357 / Et1/99), this protein is Cell division protein FtsB.